Reading from the N-terminus, the 68-residue chain is Guanine nucleotide-binding protein G(I)/G(S)/G(O) subunit gamma-10 (68 aa).

The residue at position 2 (Ser-2) is an N-acetylserine. Position 65 is a cysteine methyl ester (Cys-65). The S-geranylgeranyl cysteine moiety is linked to residue Cys-65. A propeptide spans 66 to 68 (removed in mature form); that stretch reads ALL.

It belongs to the G protein gamma family. G proteins are composed of 3 units, alpha, beta and gamma. As to expression, abundantly and ubiquitously expressed.

Its subcellular location is the cell membrane. Functionally, guanine nucleotide-binding proteins (G proteins) are involved as a modulator or transducer in various transmembrane signaling systems. The beta and gamma chains are required for the GTPase activity, for replacement of GDP by GTP, and for G protein-effector interaction. Interacts with beta-1 and beta-2, but not with beta-3. This chain is Guanine nucleotide-binding protein G(I)/G(S)/G(O) subunit gamma-10 (GNG10), found in Homo sapiens (Human).